We begin with the raw amino-acid sequence, 315 residues long: 4-diphosphocytidyl-2-C-methyl-D-erythritol kinase (315 aa).

Residue Lys11 is part of the active site. 99 to 109 (PMAAGLAGGSA) contributes to the ATP binding site. Asp141 is an active-site residue.

The protein belongs to the GHMP kinase family. IspE subfamily.

The enzyme catalyses 4-CDP-2-C-methyl-D-erythritol + ATP = 4-CDP-2-C-methyl-D-erythritol 2-phosphate + ADP + H(+). Its pathway is isoprenoid biosynthesis; isopentenyl diphosphate biosynthesis via DXP pathway; isopentenyl diphosphate from 1-deoxy-D-xylulose 5-phosphate: step 3/6. Catalyzes the phosphorylation of the position 2 hydroxy group of 4-diphosphocytidyl-2C-methyl-D-erythritol. The polypeptide is 4-diphosphocytidyl-2-C-methyl-D-erythritol kinase (Synechocystis sp. (strain ATCC 27184 / PCC 6803 / Kazusa)).